The following is a 170-amino-acid chain: Large ribosomal subunit protein bL9 (170 aa).

The interval 149–170 is disordered; the sequence is RTEEADAEESAAEEPAVEEAAE. Acidic residues predominate over residues 153 to 170; the sequence is ADAEESAAEEPAVEEAAE.

This sequence belongs to the bacterial ribosomal protein bL9 family.

Binds to the 23S rRNA. The chain is Large ribosomal subunit protein bL9 from Oleidesulfovibrio alaskensis (strain ATCC BAA-1058 / DSM 17464 / G20) (Desulfovibrio alaskensis).